Here is a 188-residue protein sequence, read N- to C-terminus: GTP cyclohydrolase 1 (188 aa).

Zn(2+)-binding residues include Cys76, His79, and Cys148.

The protein belongs to the GTP cyclohydrolase I family. Homomer.

It catalyses the reaction GTP + H2O = 7,8-dihydroneopterin 3'-triphosphate + formate + H(+). It participates in cofactor biosynthesis; 7,8-dihydroneopterin triphosphate biosynthesis; 7,8-dihydroneopterin triphosphate from GTP: step 1/1. The polypeptide is GTP cyclohydrolase 1 (Thermoanaerobacter pseudethanolicus (strain ATCC 33223 / 39E) (Clostridium thermohydrosulfuricum)).